The following is a 679-amino-acid chain: Methionine--tRNA ligase (679 aa).

The 'HIGH' region signature appears at 15-25; it reads PYANGSIHLGH. Residues Cys146, Cys149, Cys159, and Cys162 each coordinate Zn(2+). The short motif at 332–336 is the 'KMSKS' region element; the sequence is KMSKS. Position 335 (Lys335) interacts with ATP. One can recognise a tRNA-binding domain in the interval 577–679; it reads DFAKVDMRVA…AGALPGMPVK (103 aa).

This sequence belongs to the class-I aminoacyl-tRNA synthetase family. MetG type 1 subfamily. As to quaternary structure, homodimer. Zn(2+) serves as cofactor.

The protein localises to the cytoplasm. It carries out the reaction tRNA(Met) + L-methionine + ATP = L-methionyl-tRNA(Met) + AMP + diphosphate. Its function is as follows. Is required not only for elongation of protein synthesis but also for the initiation of all mRNA translation through initiator tRNA(fMet) aminoacylation. This is Methionine--tRNA ligase from Sodalis glossinidius (strain morsitans).